The primary structure comprises 213 residues: Orotate phosphoribosyltransferase (213 aa).

Lys-26 is a 5-phospho-alpha-D-ribose 1-diphosphate binding site. Residue Phe-34–Phe-35 coordinates orotate. 5-phospho-alpha-D-ribose 1-diphosphate contacts are provided by residues Tyr-72 to Lys-73, Arg-99, Lys-100, Lys-103, His-105, and Asp-124 to Ala-132. Residues Thr-128 and Arg-156 each contribute to the orotate site.

The protein belongs to the purine/pyrimidine phosphoribosyltransferase family. PyrE subfamily. As to quaternary structure, homodimer. Mg(2+) serves as cofactor.

The enzyme catalyses orotidine 5'-phosphate + diphosphate = orotate + 5-phospho-alpha-D-ribose 1-diphosphate. The protein operates within pyrimidine metabolism; UMP biosynthesis via de novo pathway; UMP from orotate: step 1/2. Catalyzes the transfer of a ribosyl phosphate group from 5-phosphoribose 1-diphosphate to orotate, leading to the formation of orotidine monophosphate (OMP). In Pseudomonas aeruginosa (strain UCBPP-PA14), this protein is Orotate phosphoribosyltransferase.